The primary structure comprises 172 residues: Ribosome maturation factor RimM (172 aa).

Residues 95–168 (DEGEFYYHQI…RVDVAIMEGL (74 aa)) enclose the PRC barrel domain.

It belongs to the RimM family. As to quaternary structure, binds ribosomal protein uS19.

The protein localises to the cytoplasm. Functionally, an accessory protein needed during the final step in the assembly of 30S ribosomal subunit, possibly for assembly of the head region. Essential for efficient processing of 16S rRNA. May be needed both before and after RbfA during the maturation of 16S rRNA. It has affinity for free ribosomal 30S subunits but not for 70S ribosomes. The chain is Ribosome maturation factor RimM from Streptococcus uberis (strain ATCC BAA-854 / 0140J).